The chain runs to 59 residues: Large ribosomal subunit protein bL32 (59 aa).

Positions 1 to 20 (MAVQKNKPTRSKRGMRRSHD) are disordered. The span at 7-19 (KPTRSKRGMRRSH) shows a compositional bias: basic residues.

This sequence belongs to the bacterial ribosomal protein bL32 family.

This Wigglesworthia glossinidia brevipalpis protein is Large ribosomal subunit protein bL32.